The chain runs to 112 residues: Glutaredoxin-C6 (112 aa).

Residues Leu3 to Ala103 enclose the Glutaredoxin domain. Residues Cys23 and Cys26 are joined by a disulfide bond.

The protein belongs to the glutaredoxin family. CPYC subfamily. In terms of processing, the N-terminus is blocked. As to expression, expressed in aleurone layer.

The protein localises to the cytoplasm. Functionally, has a glutathione-disulfide oxidoreductase activity in the presence of NADPH and glutathione reductase. Reduces low molecular weight disulfides and proteins. Possesses thioltransferase, dehydroascorbate reductase and GSH-dependent peroxidase activities in vitro. The sequence is that of Glutaredoxin-C6 (GRXC6) from Oryza sativa subsp. japonica (Rice).